The chain runs to 182 residues: UPF0301 protein MCA0413 1 (182 aa).

It belongs to the UPF0301 (AlgH) family.

This is UPF0301 protein MCA0413 1 from Methylococcus capsulatus (strain ATCC 33009 / NCIMB 11132 / Bath).